A 303-amino-acid chain; its full sequence is Ribosomal protein L11 methyltransferase (303 aa).

The S-adenosyl-L-methionine site is built by Thr144, Gly165, Asp187, and Asn235.

The protein belongs to the methyltransferase superfamily. PrmA family.

Its subcellular location is the cytoplasm. The catalysed reaction is L-lysyl-[protein] + 3 S-adenosyl-L-methionine = N(6),N(6),N(6)-trimethyl-L-lysyl-[protein] + 3 S-adenosyl-L-homocysteine + 3 H(+). Functionally, methylates ribosomal protein L11. The protein is Ribosomal protein L11 methyltransferase of Prochlorococcus marinus (strain MIT 9301).